Reading from the N-terminus, the 681-residue chain is Secretion system apparatus protein SsaV (681 aa).

Transmembrane regions (helical) follow at residues 24–44 (MVLA…LPTW), 48–68 (ILIT…IYLS), 73–93 (LSVF…LTIS), 118–138 (GNLT…FIVI), 206–226 (TIAG…IAIV), 244–264 (IGDG…AGII), and 295–315 (AVVL…LAFF).

The protein belongs to the FHIPEP (flagella/HR/invasion proteins export pore) family.

It localises to the cell inner membrane. In terms of biological role, component of Salmonella pathogenicity island 2 (SPI-2) type III secretion system, required for secretion of some type III-secreted effectors including the SpvB exotoxin. The chain is Secretion system apparatus protein SsaV (ssaV) from Salmonella typhimurium (strain 14028s / SGSC 2262).